The sequence spans 860 residues: GAS2-like protein 2 (860 aa).

Positions 1-12 (MSQHVGHGRRPR) are enriched in basic residues. Positions 1 to 22 (MSQHVGHGRRPRTPGPPVRSIR) are disordered. The 128-residue stretch at 32–159 (EAMKEDLAEW…CLLELGRRAW (128 aa)) folds into the Calponin-homology (CH) domain. The region spanning 201–273 (CHFHNLDQMV…HYLDKHDPCR (73 aa)) is the GAR domain. Disordered stretches follow at residues 281 to 459 (PGSF…SLAS), 473 to 574 (QLSE…RHTS), 697 to 743 (TTVR…KGKR), 758 to 781 (KLRP…IPKP), and 801 to 860 (ATLG…ESWV). Residues 301–316 (GPSQPQPTMTISRSQS) are compositionally biased toward polar residues. Residues 347–364 (PPVRARTLREDPLPRSQE) are compositionally biased toward basic and acidic residues. Composition is skewed to polar residues over residues 365–393 (KPTP…STLS) and 473–485 (QLSE…SSSP). The segment at 431–860 (QRLQIPEATS…PLSPEEESWV (430 aa)) is interaction with ADORA2A and GNAS. Basic and acidic residues predominate over residues 530 to 549 (NLDRSTHGHHSVEASGDHQT). Positions 724–733 (RSCSDPSSDK) are enriched in polar residues. Positions 758-768 (KLRPRIRPRRD) are enriched in basic residues. Residues 828–840 (SNISLESSIQPAE) are compositionally biased toward polar residues.

The protein belongs to the GAS2 family. In terms of assembly, interacts with ADORA2A (via its cytoplasmic C-terminal domain). Interacts with GNAS, GNAL, GNAQ, and GNA13. Interacts with MAPRE1. In terms of tissue distribution, expressed in tracheal epithelial cells (at protein level).

It is found in the cytoplasm. The protein localises to the cytoskeleton. Its subcellular location is the cell membrane. It localises to the stress fiber. The protein resides in the cilium basal body. In terms of biological role, involved in the cross-linking of microtubules and microfilaments. Regulates microtubule dynamics and stability by interacting with microtubule plus-end tracking proteins, such as MAPRE1, to regulate microtubule growth along actin stress fibers. Enhances ADORA2-mediated adenylyl cyclase activation by acting as a scaffold to recruit trimeric G-protein complexes to ADORA2A. Regulates ciliary orientation and performance in cells located in the airway. The polypeptide is GAS2-like protein 2 (Gas2l2) (Mus musculus (Mouse)).